Consider the following 89-residue polypeptide: Small ribosomal subunit protein uS15 (89 aa).

It belongs to the universal ribosomal protein uS15 family. In terms of assembly, part of the 30S ribosomal subunit. Forms a bridge to the 50S subunit in the 70S ribosome, contacting the 23S rRNA.

One of the primary rRNA binding proteins, it binds directly to 16S rRNA where it helps nucleate assembly of the platform of the 30S subunit by binding and bridging several RNA helices of the 16S rRNA. Its function is as follows. Forms an intersubunit bridge (bridge B4) with the 23S rRNA of the 50S subunit in the ribosome. The protein is Small ribosomal subunit protein uS15 of Ureaplasma parvum serovar 3 (strain ATCC 27815 / 27 / NCTC 11736).